Here is a 137-residue protein sequence, read N- to C-terminus: Large ribosomal subunit protein uL16c (137 aa).

This sequence belongs to the universal ribosomal protein uL16 family. As to quaternary structure, part of the 50S ribosomal subunit.

It localises to the plastid. It is found in the chloroplast. The polypeptide is Large ribosomal subunit protein uL16c (Trieres chinensis (Marine centric diatom)).